The primary structure comprises 566 residues: Chaperone ric-8 (566 aa).

It belongs to the synembryn family. As to quaternary structure, interacts with GDP-bound G-alpha proteins goa-1 and gpa-16. Does not interact with G-alpha proteins when they are in complex with subunits beta and gamma. As to expression, present throughout the nervous system in juveniles and adults (at protein level).

Its subcellular location is the cytoplasm. The protein resides in the cell cortex. Its function is as follows. Chaperone that specifically binds and folds some, but not all, nascent G alpha proteins prior to G protein heterotrimer formation, promoting their stability and activity. Also acts as a guanine nucleotide exchange factor (GEF) for G alpha proteins by stimulating exchange of bound GDP for free GTP. Able to facilitate synaptic transmission in the nervous system probably by activating G(q)-alpha (egl-30). Also able to activate the G(s)-alpha in synaptic signaling network. Plays a key role in asymmetric spindle positioning, a step for asymmetric cell division that generates cell diversity during development by activating G(i)-alpha protein goa-1 and gpa-16 independently of G-protein coupled receptors. While it acts as a GEF for goa-1, it has no GEF activity toward gpa-16. In addition to its GEF activity, it is required for cortical subcellular localization of G-alpha proteins such as gpa-16. Also required for the interaction of goa-1 and gpr-1/2, suggesting that it may act by generating G-alpha proteins free from G-beta-gamma subunits, enabling gpr-1/2 to mediate asymmetric cell division. This Caenorhabditis elegans protein is Chaperone ric-8 (ric-8).